Reading from the N-terminus, the 77-residue chain is DNA-directed RNA polymerase subunit Rpo5 (77 aa).

This sequence belongs to the archaeal Rpo5/eukaryotic RPB5 RNA polymerase subunit family. Part of the RNA polymerase complex.

It localises to the cytoplasm. It catalyses the reaction RNA(n) + a ribonucleoside 5'-triphosphate = RNA(n+1) + diphosphate. In terms of biological role, DNA-dependent RNA polymerase (RNAP) catalyzes the transcription of DNA into RNA using the four ribonucleoside triphosphates as substrates. The protein is DNA-directed RNA polymerase subunit Rpo5 of Methanothermobacter thermautotrophicus (strain ATCC 29096 / DSM 1053 / JCM 10044 / NBRC 100330 / Delta H) (Methanobacterium thermoautotrophicum).